Consider the following 90-residue polypeptide: Large ribosomal subunit protein bL27 (90 aa).

The segment covering 1-13 has biased composition (low complexity); sequence MATKKSGGSSSNG. A disordered region spans residues 1 to 20; it reads MATKKSGGSSSNGRDSRGRR.

The protein belongs to the bacterial ribosomal protein bL27 family.

The sequence is that of Large ribosomal subunit protein bL27 from Anaplasma marginale (strain Florida).